The sequence spans 316 residues: Ribosomal RNA small subunit methyltransferase H (316 aa).

S-adenosyl-L-methionine is bound by residues Ala35–His37, Asp55, Phe84, Asp105, and Gln112.

Belongs to the methyltransferase superfamily. RsmH family.

Its subcellular location is the cytoplasm. It carries out the reaction cytidine(1402) in 16S rRNA + S-adenosyl-L-methionine = N(4)-methylcytidine(1402) in 16S rRNA + S-adenosyl-L-homocysteine + H(+). Specifically methylates the N4 position of cytidine in position 1402 (C1402) of 16S rRNA. This Streptococcus pneumoniae (strain JJA) protein is Ribosomal RNA small subunit methyltransferase H.